The primary structure comprises 20 residues: Isocitrate dehydrogenase [NADP] (20 aa).

The protein belongs to the isocitrate and isopropylmalate dehydrogenases family. Requires Mn(2+) as cofactor. Mg(2+) is required as a cofactor.

It localises to the cytoplasm. The catalysed reaction is D-threo-isocitrate + NADP(+) = 2-oxoglutarate + CO2 + NADPH. The sequence is that of Isocitrate dehydrogenase [NADP] from Naegleria fowleri (Brain eating amoeba).